A 144-amino-acid chain; its full sequence is Large ribosomal subunit protein uL15 (144 aa).

A disordered region spans residues 1–44 (MNLNELQPAAGSRKLRNRVGRGTSSGNGKTSGRGQKGQKARGKV). Residues 23–35 (TSSGNGKTSGRGQ) are compositionally biased toward gly residues.

This sequence belongs to the universal ribosomal protein uL15 family. As to quaternary structure, part of the 50S ribosomal subunit.

Functionally, binds to the 23S rRNA. In Leuconostoc citreum (strain KM20), this protein is Large ribosomal subunit protein uL15.